We begin with the raw amino-acid sequence, 314 residues long: Olfactory receptor 1 (314 aa).

Over 1-29 (MTERNQTVISQFLLLGLPIPPEHQHVFYA) the chain is Extracellular. An N-linked (GlcNAc...) asparagine glycan is attached at Asn-5. The helical transmembrane segment at 30–50 (LFLSMYLTTVLGNLIIIILIL) threads the bilayer. Residues 51-59 (LDSHLHTPM) lie on the Cytoplasmic side of the membrane. A helical membrane pass occupies residues 60-81 (YLFLSNLSFSDLCFSSVTMPKL). Topologically, residues 82–97 (LQNMQSQVPSIPYAGC) are extracellular. Cysteines 97 and 179 form a disulfide. A helical transmembrane segment spans residues 98–118 (LSQIYFFLFFGDLGNFLLVAM). Over 119–143 (AYDRYVAICFPLHYMSIMSPKLCVS) the chain is Cytoplasmic. A helical transmembrane segment spans residues 144-164 (LVVLSWVLTTFHAMLHTLLMA). Topologically, residues 165–196 (RLSFCEDNVIPHFFCDMSALLKLACSDTRVNE) are extracellular. Residues 197-217 (VVIFIVVSLFLVLPFALIIMS) form a helical membrane-spanning segment. The Cytoplasmic segment spans residues 218 to 240 (YVRIVSSILKVPSSQGIYKAFST). A helical transmembrane segment spans residues 241–261 (CGSHLSVVSLFYGTVIGLYLC). The Extracellular segment spans residues 262–271 (PSSNNSTVKE). N-linked (GlcNAc...) asparagine glycosylation is found at Asn-265 and Asn-266. Residues 272-292 (TVMSLMYTVVTPMLNPFIYSL) form a helical membrane-spanning segment. Residues 293–314 (RNRDIKGAMERIFCKRKIQLNL) are Cytoplasmic-facing.

This sequence belongs to the G-protein coupled receptor 1 family. Olfactory epithelium.

The protein resides in the cell membrane. Odorant receptor. Activated by a lily-derived aldehyde as well as other odorants. May signal through an inositol 1,4,5-trisphosphate (IP3) second messenger system. The sequence is that of Olfactory receptor 1 from Rattus norvegicus (Rat).